A 176-amino-acid polypeptide reads, in one-letter code: NAD(P)H-quinone oxidoreductase subunit 6, chloroplastic (176 aa).

The next 5 membrane-spanning stretches (helical) occupy residues 10 to 30 (FLLVFLGSGLLVGGLGVVLLP), 32 to 52 (PIFSAFSLGFVLVCISLLYIL), 61 to 81 (AQLLIYVGAINVLIIFAVMFM), 92 to 112 (LWTIGNGITSLVCTTILFLLM), and 152 to 172 (FFLPFELISIILLVALIGAIS).

Belongs to the complex I subunit 6 family. NDH is composed of at least 16 different subunits, 5 of which are encoded in the nucleus.

It localises to the plastid. It is found in the chloroplast thylakoid membrane. It carries out the reaction a plastoquinone + NADH + (n+1) H(+)(in) = a plastoquinol + NAD(+) + n H(+)(out). The catalysed reaction is a plastoquinone + NADPH + (n+1) H(+)(in) = a plastoquinol + NADP(+) + n H(+)(out). NDH shuttles electrons from NAD(P)H:plastoquinone, via FMN and iron-sulfur (Fe-S) centers, to quinones in the photosynthetic chain and possibly in a chloroplast respiratory chain. The immediate electron acceptor for the enzyme in this species is believed to be plastoquinone. Couples the redox reaction to proton translocation, and thus conserves the redox energy in a proton gradient. This is NAD(P)H-quinone oxidoreductase subunit 6, chloroplastic (ndhG) from Arabidopsis thaliana (Mouse-ear cress).